A 589-amino-acid polypeptide reads, in one-letter code: Ubiquilin-1 (589 aa).

Residues Met-1–Pro-11 are compositionally biased toward gly residues. 2 disordered regions span residues Met-1–Lys-35 and Asn-110–Asn-145. Ala-2 bears the N-acetylalanine mark. The span at Gly-12–Lys-35 shows a compositional bias: low complexity. In terms of domain architecture, Ubiquitin-like spans Met-37–Arg-111. Polar residues predominate over residues Asn-110–Gly-124. Over residues Ser-125 to Asn-145 the composition is skewed to low complexity. Residues Gln-178–Pro-428 are interaction with UBXN4. STI1 domains lie at Asn-182–Met-210 and Asn-212–Met-251. Positions Pro-295–Met-371 are disordered. A compositionally biased stretch (polar residues) spans Leu-299 to Arg-313. Low complexity predominate over residues Gln-327–Ala-360. STI1 domains lie at Asn-387–Met-434 and Leu-438–Leu-470. A disordered region spans residues Leu-488–Pro-520. Positions Gly-489 to Gly-499 are enriched in gly residues. Residues Glu-509–Pro-520 are compositionally biased toward polar residues. Positions Arg-546–Ser-586 constitute a UBA domain.

As to quaternary structure, monomer and homodimer. Heterodimer with UBQLN2. Binds CD47, NBL1, GABRA1, GABRA2, GABRA3, GABRA6, GABRB1, GABRB2 and GABRB3. Binds UBE3A, BTRC, P4HB and MTOR. Interacts with the proteasome 19S subunit. Interacts (via ubiquitin-like domain) with TREX1; the interaction is direct and may control TREX1 subcellular location. Forms a complex with UBXN4 and VCP. Interacts (via UBA domain) with UBQLN4 (via ubiquitin-like domain). Found in a complex with UBQLN2 and MAP1LC3A/B/C. The monomeric form interacts with PSEN2. The monomeric form interacts with PSEN1. Interacts with ORAI1. Interacts (via UBA domain) with TICAM1. Interacts with EPS15. Interacts (via UBA domain) with UBA52 and (via ubiquitin-like domain) with PSMD3 and PSMD4. Interacts with HERPUD1. Interacts with MAP1LC3A/B/C in the presence of UBQLN4. Interacts (via ubiquitin-like domain) with EPS15 (via UIM domains) and both the ubiquitinated and non-ubiquitinated forms can interact with EPS15. Interacts (via ubiquitin-like domain) with EPS15L1, HGS (via UIM domain) and STAM2 (via UIM domain). Interacts with BCL2L10/BCL-B; in the cytoplasm. In terms of assembly, monomeric form interacts with PSEN1. Post-translationally, degraded during both macroautophagy and during chaperone-mediated autophagy (CMA). Phosphorylated. In terms of processing, ubiquitinated. As to expression, brain (at protein level). Ubiquitous. Highly expressed throughout the brain; detected in neurons and in neuropathological lesions, such as neurofibrillary tangles and Lewy bodies. Highly expressed in heart, placenta, pancreas, lung, liver, skeletal muscle and kidney.

It is found in the cytoplasm. The protein resides in the nucleus. The protein localises to the endoplasmic reticulum. It localises to the cytoplasmic vesicle. Its subcellular location is the autophagosome. It is found in the cell membrane. Plays an important role in the regulation of different protein degradation mechanisms and pathways including ubiquitin-proteasome system (UPS), autophagy and endoplasmic reticulum-associated protein degradation (ERAD) pathway. Mediates the proteasomal targeting of misfolded or accumulated proteins for degradation by binding (via UBA domain) to their polyubiquitin chains and by interacting (via ubiquitin-like domain) with the subunits of the proteasome. Plays a role in the ERAD pathway via its interaction with ER-localized proteins UBXN4, VCP and HERPUD1 and may form a link between the polyubiquitinated ERAD substrates and the proteasome. Involved in the regulation of macroautophagy and autophagosome formation; required for maturation of autophagy-related protein LC3 from the cytosolic form LC3-I to the membrane-bound form LC3-II and may assist in the maturation of autophagosomes to autolysosomes by mediating autophagosome-lysosome fusion. Negatively regulates the TICAM1/TRIF-dependent toll-like receptor signaling pathway by decreasing the abundance of TICAM1 via the autophagic pathway. Promotes the ubiquitination and lysosomal degradation of ORAI1, consequently down-regulating the ORAI1-mediated Ca2+ mobilization. Suppresses the maturation and proteasomal degradation of amyloid beta A4 protein (A4) by stimulating the lysine 63 (K63)-linked polyubiquitination. Delays the maturation of A4 by sequestering it in the Golgi apparatus and preventing its transport to the cell surface for subsequent processing. Ubiquitinates BCL2L10 and thereby stabilizes protein abundance. Functionally, plays a role in unfolded protein response (UPR) by attenuating the induction of UPR-inducible genes, DDTI3/CHOP, HSPA5 and PDIA2 during ER stress. Plays a key role in the regulation of the levels of PSEN1 by targeting its accumulation to aggresomes which may then be removed from cells by autophagocytosis. Its function is as follows. Plays a role in unfolded protein response (UPR) by attenuating the induction of UPR-inducible genes, DDTI3/CHOP, HSPA5 and PDIA2 during ER stress. The sequence is that of Ubiquilin-1 (UBQLN1) from Homo sapiens (Human).